The primary structure comprises 294 residues: 1,4-dihydroxy-2-naphthoate octaprenyltransferase (294 aa).

Helical transmembrane passes span 35–55 (SAVW…VIGV), 103–123 (AGLA…ATCI), 140–160 (GFGE…GTEY), 166–186 (VDWV…SVLV), 220–240 (LLVA…WCAV), and 272–292 (GLAM…AGSV).

Belongs to the MenA family. Type 1 subfamily.

It localises to the cell membrane. It catalyses the reaction an all-trans-polyprenyl diphosphate + 1,4-dihydroxy-2-naphthoate + H(+) = a 2-demethylmenaquinol + CO2 + diphosphate. It functions in the pathway quinol/quinone metabolism; menaquinone biosynthesis; menaquinol from 1,4-dihydroxy-2-naphthoate: step 1/2. In terms of biological role, conversion of 1,4-dihydroxy-2-naphthoate (DHNA) to demethylmenaquinone (DMK). In Mycobacterium leprae (strain TN), this protein is 1,4-dihydroxy-2-naphthoate octaprenyltransferase.